Here is a 444-residue protein sequence, read N- to C-terminus: Phosphoglucosamine mutase (444 aa).

The active-site Phosphoserine intermediate is the serine 102. The Mg(2+) site is built by serine 102, aspartate 241, aspartate 243, and aspartate 245. Serine 102 carries the post-translational modification Phosphoserine.

This sequence belongs to the phosphohexose mutase family. It depends on Mg(2+) as a cofactor. Post-translationally, activated by phosphorylation.

It carries out the reaction alpha-D-glucosamine 1-phosphate = D-glucosamine 6-phosphate. In terms of biological role, catalyzes the conversion of glucosamine-6-phosphate to glucosamine-1-phosphate. The chain is Phosphoglucosamine mutase from Buchnera aphidicola subsp. Acyrthosiphon pisum (strain 5A).